A 304-amino-acid chain; its full sequence is MSGLQVLLVAGTHGNEINGPWLLDQWSQTPELINTHGVGVVPVIGNPEALALGRRYLDCDLNRSFRLDLLRSPSILDREVVRAKQLLSFFGPEGSTPCQIVIDLHSTTSAMGSTLVVYGRRSVDLALAALIQARLGLPIYLHDGDDDQQGFLVERWPCGLVIEIGPVPQGLLKARIIEQTRLAVQACLEALSSVASGSPTYPDEFVVHSHLGSLDLPRDALGQPAACVHPSLQGRDWQPLQMGAPLFLWPDGEVFRFEGRDSPIPVFINEAAYVEKHIAMSLTCREVCPLPEQWQGALQQLVDC.

The Zn(2+) site is built by histidine 13 and glutamate 16. Residues arginine 55 and 62–63 (NR) each bind substrate. Histidine 105 is a binding site for Zn(2+). Residues glutamate 163 and tyrosine 273 each contribute to the substrate site.

Belongs to the AspA/AstE family. Aspartoacylase subfamily. Zn(2+) serves as cofactor.

It catalyses the reaction an N-acyl-L-aspartate + H2O = a carboxylate + L-aspartate. The polypeptide is Probable aspartoacylase (Prochlorococcus marinus (strain MIT 9313)).